Consider the following 428-residue polypeptide: UDP-N-acetylglucosamine 1-carboxyvinyltransferase 2 (428 aa).

Phosphoenolpyruvate is bound at residue 22 to 23; that stretch reads KN. Arginine 92 is a binding site for UDP-N-acetyl-alpha-D-glucosamine. The Proton donor role is filled by cysteine 116. The residue at position 116 (cysteine 116) is a 2-(S-cysteinyl)pyruvic acid O-phosphothioketal. Residues 121–125, aspartate 304, and isoleucine 326 each bind UDP-N-acetyl-alpha-D-glucosamine; that span reads RPIDQ.

It belongs to the EPSP synthase family. MurA subfamily.

The protein localises to the cytoplasm. It catalyses the reaction phosphoenolpyruvate + UDP-N-acetyl-alpha-D-glucosamine = UDP-N-acetyl-3-O-(1-carboxyvinyl)-alpha-D-glucosamine + phosphate. It participates in cell wall biogenesis; peptidoglycan biosynthesis. Its function is as follows. Cell wall formation. Adds enolpyruvyl to UDP-N-acetylglucosamine. The sequence is that of UDP-N-acetylglucosamine 1-carboxyvinyltransferase 2 from Oceanobacillus iheyensis (strain DSM 14371 / CIP 107618 / JCM 11309 / KCTC 3954 / HTE831).